Here is a 111-residue protein sequence, read N- to C-terminus: MKWIVIDTVIQPSCGISFSVIWSKIKLIIWYQSDAFLPPESIFTLTHTGIMLNNKVLPVTIYNVVPFNKTFWNLIKNSQECPTNTDNVLNECFNNRCTLQICPYGLKQQSP.

Belongs to the IraM/RssC family.

It localises to the cytoplasm. Inhibits RpoS proteolysis by regulating RssB activity, thereby increasing the stability of the sigma stress factor RpoS during magnesium starvation. The chain is Anti-adapter protein IraM from Escherichia coli O127:H6 (strain E2348/69 / EPEC).